Here is a 479-residue protein sequence, read N- to C-terminus: Aspartyl/glutamyl-tRNA(Asn/Gln) amidotransferase subunit B (479 aa).

The protein belongs to the GatB/GatE family. GatB subfamily. In terms of assembly, heterotrimer of A, B and C subunits.

It carries out the reaction L-glutamyl-tRNA(Gln) + L-glutamine + ATP + H2O = L-glutaminyl-tRNA(Gln) + L-glutamate + ADP + phosphate + H(+). The catalysed reaction is L-aspartyl-tRNA(Asn) + L-glutamine + ATP + H2O = L-asparaginyl-tRNA(Asn) + L-glutamate + ADP + phosphate + 2 H(+). Functionally, allows the formation of correctly charged Asn-tRNA(Asn) or Gln-tRNA(Gln) through the transamidation of misacylated Asp-tRNA(Asn) or Glu-tRNA(Gln) in organisms which lack either or both of asparaginyl-tRNA or glutaminyl-tRNA synthetases. The reaction takes place in the presence of glutamine and ATP through an activated phospho-Asp-tRNA(Asn) or phospho-Glu-tRNA(Gln). This chain is Aspartyl/glutamyl-tRNA(Asn/Gln) amidotransferase subunit B, found in Mycoplasma mycoides subsp. mycoides SC (strain CCUG 32753 / NCTC 10114 / PG1).